Here is a 477-residue protein sequence, read N- to C-terminus: Acetolactate synthase small subunit 2, chloroplastic (477 aa).

The N-terminal 53 residues, 1–53, are a transit peptide targeting the chloroplast; sequence MAATTTATSLFSSRLHFQNQNQGYGFPAKTPNSLQVNQIIDGRKMRNATVLSA. ACT domains lie at 78–150 and 309–383; these read TISV…DLSK and TLSL…NITH. Aspartate 85, isoleucine 89, isoleucine 90, asparagine 103, isoleucine 104, asparagine 316, valine 320, leucine 321, asparagine 334, and isoleucine 335 together coordinate L-valine.

Belongs to the acetolactate synthase small subunit family. In terms of assembly, the acetolactate synthase complex contains 4 homodimers of the large catalytic subunits, and 1 homotetramer of the small regulatory subunits. As to expression, expressed in roots in the vascular tissuem in cells around the quiescent center, in floral organs at the tips of young siliques and in the joint region between the silique and the pedicel. Barely detectable in mature leaves or siliques.

The protein localises to the plastid. Its subcellular location is the chloroplast. It localises to the peroxisome. Its pathway is amino-acid biosynthesis; L-isoleucine biosynthesis; L-isoleucine from 2-oxobutanoate: step 1/4. It functions in the pathway amino-acid biosynthesis; L-valine biosynthesis; L-valine from pyruvate: step 1/4. Its function is as follows. Regulatory subunit of acetohydroxy-acid synthase. Involved in the feed-back inhibition by branched-chain amino acids but not in herbicide tolerance. May play a role in valine and isoleucine-mediated feedback inhibition in roots. In vitro, inhibited by valine, but not leucine or isoleucine. Required for reproductive development and sodium homeostasis. This is Acetolactate synthase small subunit 2, chloroplastic from Arabidopsis thaliana (Mouse-ear cress).